A 252-amino-acid polypeptide reads, in one-letter code: Sulfate transporter CysZ (252 aa).

Transmembrane regions (helical) follow at residues F29–F49, F66–F86, L141–L160, V164–F186, and A212–V232.

This sequence belongs to the CysZ family.

The protein localises to the cell inner membrane. In terms of biological role, high affinity, high specificity proton-dependent sulfate transporter, which mediates sulfate uptake. Provides the sulfur source for the cysteine synthesis pathway. The polypeptide is Sulfate transporter CysZ (Vibrio atlanticus (strain LGP32) (Vibrio splendidus (strain Mel32))).